The following is a 237-amino-acid chain: MRFSPSLEQGRLLRRYKRFLADIELASGEQMTIHCPNTGSMLNCMREGGQVWFSRSNDPKRKLPGTWEISETPQGRLACVNTGRANALVEEALRAGTITELVGFTALKREVAYGEEGSRIDFRLEFEGAPAYVEVKSVTLGYPDTAVAAFPDAVTQRGAKHLRELAKLARQGVRAVQLYCVNLTGIDAVRPAEEIDTAYAQALRAAVADGVEVLAYGTRLDAEGIVIDRRLPVLLTP.

Belongs to the SfsA family.

This is Sugar fermentation stimulation protein homolog from Pseudomonas putida (strain ATCC 700007 / DSM 6899 / JCM 31910 / BCRC 17059 / LMG 24140 / F1).